Here is a 1009-residue protein sequence, read N- to C-terminus: Regulator of telomere elongation helicase 1 homolog (1009 aa).

A Helicase ATP-binding domain is found at 7–322; the sequence is AGIPVHFPFE…KEMLLELEKA (316 aa). 42 to 49 contributes to the ATP binding site; sequence SPTGTGKT. [4Fe-4S] cluster is bound by residues Cys146, Cys164, Cys173, and Cys209. Positions 252 to 255 match the DEAH box motif; it reads DEAH.

The protein belongs to the helicase family. RAD3/XPD subfamily.

Its subcellular location is the nucleus. It catalyses the reaction ATP + H2O = ADP + phosphate + H(+). Its function is as follows. A probable ATP-dependent DNA helicase implicated in DNA repair and the maintenance of genomic stability. Acts as an anti-recombinase to counteract toxic recombination and limit crossover during meiosis. Regulates meiotic recombination and crossover homeostasis by physically dissociating strand invasion events and thereby promotes noncrossover repair by meiotic synthesis dependent strand annealing (SDSA) as well as disassembly of D loop recombination intermediates. This is Regulator of telomere elongation helicase 1 homolog from Drosophila persimilis (Fruit fly).